The primary structure comprises 488 residues: 7,8-epoxymelianol synthase CYP88A51 (488 aa).

The chain crosses the membrane as a helical span at residues 4-24 (NFLWPMLAMFLGSLVVMFGFL). Cys436 is a binding site for heme.

This sequence belongs to the cytochrome P450 family. Heme serves as cofactor. As to expression, accumulates in mature fruits and in juice vesicles.

It is found in the membrane. The catalysed reaction is melianol + reduced [NADPH--hemoprotein reductase] + O2 = 7,8-epoxymelianol + oxidized [NADPH--hemoprotein reductase] + H2O + H(+). Its pathway is secondary metabolite biosynthesis; terpenoid biosynthesis. Functionally, monooxygenase involved in the biosynthesis of limonoids triterpene natural products such as limonin, a compound with insecticidal activity responsible for the bitter taste in citrus. Catalyzes the epoxidation of melianol to produce 7,8-epoxymelianol. The chain is 7,8-epoxymelianol synthase CYP88A51 from Citrus sinensis (Sweet orange).